A 192-amino-acid chain; its full sequence is Adenylate kinase (192 aa).

12 to 17 (GSGKTT) is an ATP binding site. Residues 33-62 (STGDLLRAEVAKDSELGKKIDKIISGGNLV) form an NMP region. AMP is bound by residues threonine 34, arginine 39, 60–62 (NLV), 87–90 (GYPR), and glutamine 94. The segment at 129-135 (GRARGAD) is LID. Arginine 130 lines the ATP pocket. 2 residues coordinate AMP: arginine 132 and arginine 144. Arginine 172 contributes to the ATP binding site.

This sequence belongs to the adenylate kinase family. In terms of assembly, monomer.

It is found in the cytoplasm. It carries out the reaction AMP + ATP = 2 ADP. The protein operates within purine metabolism; AMP biosynthesis via salvage pathway; AMP from ADP: step 1/1. Functionally, catalyzes the reversible transfer of the terminal phosphate group between ATP and AMP. Plays an important role in cellular energy homeostasis and in adenine nucleotide metabolism. The chain is Adenylate kinase from Campylobacter hominis (strain ATCC BAA-381 / DSM 21671 / CCUG 45161 / LMG 19568 / NCTC 13146 / CH001A).